The chain runs to 386 residues: Succinate--CoA ligase [ADP-forming] subunit beta (386 aa).

Positions 9-244 (KQILKRFGIS…YDEEIPEEIE (236 aa)) constitute an ATP-grasp domain. ATP contacts are provided by residues lysine 46, 53–55 (GRG), glutamate 99, cysteine 102, and glutamate 107. 2 residues coordinate Mg(2+): asparagine 199 and aspartate 213. Residues asparagine 264 and 320 to 322 (GIM) each bind substrate.

It belongs to the succinate/malate CoA ligase beta subunit family. Heterotetramer of two alpha and two beta subunits. The cofactor is Mg(2+).

The enzyme catalyses succinate + ATP + CoA = succinyl-CoA + ADP + phosphate. It carries out the reaction GTP + succinate + CoA = succinyl-CoA + GDP + phosphate. It participates in carbohydrate metabolism; tricarboxylic acid cycle; succinate from succinyl-CoA (ligase route): step 1/1. In terms of biological role, succinyl-CoA synthetase functions in the citric acid cycle (TCA), coupling the hydrolysis of succinyl-CoA to the synthesis of either ATP or GTP and thus represents the only step of substrate-level phosphorylation in the TCA. The beta subunit provides nucleotide specificity of the enzyme and binds the substrate succinate, while the binding sites for coenzyme A and phosphate are found in the alpha subunit. The polypeptide is Succinate--CoA ligase [ADP-forming] subunit beta (Ehrlichia ruminantium (strain Welgevonden)).